A 385-amino-acid polypeptide reads, in one-letter code: cAMP-dependent protein kinase, catalytic subunit-like (385 aa).

A Protein kinase domain is found at leucine 63–phenylalanine 317. ATP is bound by residues isoleucine 69–valine 77 and lysine 92. Aspartate 186 serves as the catalytic Proton acceptor. Residues glutamate 318 to tryptophan 385 form the AGC-kinase C-terminal domain.

The protein belongs to the protein kinase superfamily. Ser/Thr protein kinase family. cAMP subfamily.

The catalysed reaction is L-seryl-[protein] + ATP = O-phospho-L-seryl-[protein] + ADP + H(+). The enzyme catalyses L-threonyl-[protein] + ATP = O-phospho-L-threonyl-[protein] + ADP + H(+). The chain is cAMP-dependent protein kinase, catalytic subunit-like from Caenorhabditis briggsae.